A 407-amino-acid chain; its full sequence is 3-oxoacyl-[acyl-carrier-protein] synthase 1 (407 aa).

The region spanning Met-1–Lys-405 is the Ketosynthase family 3 (KS3) domain. Catalysis depends on for beta-ketoacyl synthase activity residues Cys-164, His-299, and His-335.

It belongs to the thiolase-like superfamily. Beta-ketoacyl-ACP synthases family. As to quaternary structure, homodimer.

It localises to the cytoplasm. The enzyme catalyses a fatty acyl-[ACP] + malonyl-[ACP] + H(+) = a 3-oxoacyl-[ACP] + holo-[ACP] + CO2. The catalysed reaction is (3Z)-decenoyl-[ACP] + malonyl-[ACP] + H(+) = 3-oxo-(5Z)-dodecenoyl-[ACP] + holo-[ACP] + CO2. Its pathway is lipid metabolism; fatty acid biosynthesis. Functionally, involved in the type II fatty acid elongation cycle. Catalyzes the elongation of a wide range of acyl-ACP by the addition of two carbons from malonyl-ACP to an acyl acceptor. Can also use unsaturated fatty acids. Catalyzes a key reaction in unsaturated fatty acid (UFA) synthesis, the elongation of the cis-3-decenoyl-ACP produced by FabA. This chain is 3-oxoacyl-[acyl-carrier-protein] synthase 1 (fabB), found in Buchnera aphidicola subsp. Baizongia pistaciae (strain Bp).